The primary structure comprises 215 residues: UPF0502 protein YceH (215 aa).

At lysine 80 the chain carries N6-acetyllysine.

It belongs to the UPF0502 family.

This is UPF0502 protein YceH from Shigella boydii serotype 18 (strain CDC 3083-94 / BS512).